Reading from the N-terminus, the 171-residue chain is 3-hydroxydecanoyl-[acyl-carrier-protein] dehydratase (171 aa).

Residue histidine 70 is part of the active site.

This sequence belongs to the thioester dehydratase family. FabA subfamily. In terms of assembly, homodimer.

It is found in the cytoplasm. The catalysed reaction is a (3R)-hydroxyacyl-[ACP] = a (2E)-enoyl-[ACP] + H2O. It catalyses the reaction (3R)-hydroxydecanoyl-[ACP] = (2E)-decenoyl-[ACP] + H2O. The enzyme catalyses (2E)-decenoyl-[ACP] = (3Z)-decenoyl-[ACP]. It functions in the pathway lipid metabolism; fatty acid biosynthesis. Its function is as follows. Necessary for the introduction of cis unsaturation into fatty acids. Catalyzes the dehydration of (3R)-3-hydroxydecanoyl-ACP to E-(2)-decenoyl-ACP and then its isomerization to Z-(3)-decenoyl-ACP. Can catalyze the dehydratase reaction for beta-hydroxyacyl-ACPs with saturated chain lengths up to 16:0, being most active on intermediate chain length. This is 3-hydroxydecanoyl-[acyl-carrier-protein] dehydratase from Methylobacillus flagellatus (strain ATCC 51484 / DSM 6875 / VKM B-1610 / KT).